The sequence spans 276 residues: Pantothenate synthetase (276 aa).

ATP is bound at residue 27–34 (MGALHRGH). The active-site Proton donor is H34. Q58 contacts (R)-pantoate. Residue Q58 coordinates beta-alanine. 147 to 150 (GKKD) serves as a coordination point for ATP. Q153 contributes to the (R)-pantoate binding site. Residues V176 and 184-187 (LSSR) contribute to the ATP site.

It belongs to the pantothenate synthetase family. As to quaternary structure, homodimer.

It localises to the cytoplasm. It carries out the reaction (R)-pantoate + beta-alanine + ATP = (R)-pantothenate + AMP + diphosphate + H(+). It participates in cofactor biosynthesis; (R)-pantothenate biosynthesis; (R)-pantothenate from (R)-pantoate and beta-alanine: step 1/1. Catalyzes the condensation of pantoate with beta-alanine in an ATP-dependent reaction via a pantoyl-adenylate intermediate. The protein is Pantothenate synthetase of Helicobacter pylori (strain G27).